A 213-amino-acid polypeptide reads, in one-letter code: Adenylate kinase (213 aa).

10–15 (GSGKGS) contributes to the ATP binding site. An NMP region spans residues 30–60 (STGNLFRAILKEDSELARKIKEINVSGGKLV). Residues T31, R36, 58-60 (KLV), 87-90 (GYPR), and Q94 each bind AMP. Residues 123–160 (GRWMCPKCAGIYNIHFKKPQVDGVCDNDQATLYQRADD) form an LID region. R124 serves as a coordination point for ATP. C127 and C130 together coordinate Zn(2+). 133–134 (IY) provides a ligand contact to ATP. Residues C147 and D150 each coordinate Zn(2+). The AMP site is built by R157 and R168. Q196 lines the ATP pocket.

Belongs to the adenylate kinase family. As to quaternary structure, monomer.

It localises to the cytoplasm. It catalyses the reaction AMP + ATP = 2 ADP. It functions in the pathway purine metabolism; AMP biosynthesis via salvage pathway; AMP from ADP: step 1/1. Functionally, catalyzes the reversible transfer of the terminal phosphate group between ATP and AMP. Plays an important role in cellular energy homeostasis and in adenine nucleotide metabolism. This chain is Adenylate kinase, found in Ureaplasma urealyticum serovar 10 (strain ATCC 33699 / Western).